The sequence spans 501 residues: Solute carrier family 2, facilitated glucose transporter member 5 (501 aa).

Methionine 1 bears the N-acetylmethionine mark. Topologically, residues 1–17 (MEEKHQEETGELTLVLA) are cytoplasmic. A helical transmembrane segment spans residues 18–38 (LATLIAAFGSSFQYGYNVAAV). Tyrosine 31 lines the D-fructose pocket. At 39 to 67 (NSPSEFMQQFYNDTYYDRNEENIESFTLT) the chain is on the extracellular side. A glycan (N-linked (GlcNAc...) asparagine) is linked at asparagine 50. Residues 68 to 90 (LLWSLTVSMFPFGGFIGSLMVGT) traverse the membrane as a helical segment. At 91-97 (LVNKLGR) the chain is on the cytoplasmic side. A helical membrane pass occupies residues 98-118 (KGALLFNNIFSILPAILMGCS). At 119–125 (QIAQSFE) the chain is on the extracellular side. The chain crosses the membrane as a helical span at residues 126 to 148 (LIIISRLLVGICAGISSNVVPMY). Residues 149–160 (LGELAPKNLRGA) lie on the Cytoplasmic side of the membrane. The helical transmembrane segment at 161–181 (LGVVPQLFITVGILVAQLFGL) threads the bilayer. D-fructose is bound at residue glutamine 166. The Extracellular portion of the chain corresponds to 182 to 191 (RSLLANEDGW). Residues 192–212 (PVLLGLTGVPAGLQLLLLPFF) form a helical membrane-spanning segment. Topologically, residues 213–276 (PESPRYLLIQ…LFTMQSLRWQ (64 aa)) are cytoplasmic. A helical transmembrane segment spans residues 277-297 (LISMIVLMAGQQLSGVNAIYY). D-fructose is bound by residues glutamine 287 and 295–297 (IYY). Topologically, residues 298–312 (YADQIYLSAGVKSDD) are extracellular. Residues 313 to 333 (VQYVTAGTGAVNVFMTILTIF) form a helical membrane-spanning segment. The Cytoplasmic portion of the chain corresponds to 334 to 341 (VVELWGRR). A helical membrane pass occupies residues 342–362 (FLLLVGFSTCLIACLVLTAAL). Topologically, residues 363-370 (ALQNTISW) are extracellular. A helical membrane pass occupies residues 371–393 (MPYISIVCVIVYVIGHALGPSPI). Histidine 386 contributes to the D-fructose binding site. Topologically, residues 394–411 (PALLITEIFLQSSRPAAY) are cytoplasmic. The helical transmembrane segment at 412–432 (MIGGSVHWLSNFTVGLIFPFI) threads the bilayer. D-fructose is bound at residue 418–419 (HW). The Extracellular segment spans residues 433-438 (QMGLGP). Residues 439 to 459 (YSFIIFATICFLTTIYIFMVV) traverse the membrane as a helical segment. Topologically, residues 460-501 (PETKGRTFIEINQIFTMKNKVSDVYPKKEEELGALPHAILEQ) are cytoplasmic.

Belongs to the major facilitator superfamily. Sugar transporter (TC 2.A.1.1) family. Glucose transporter subfamily. As to expression, detected at the apical membrane of villi in the jejunum. Detected in jejunum mucosa. Detected in epididymis and whole testis (at protein level). Detected in small intestine, kidney and testis. Detected in cochlea, but not in inner or outer cochlear hair cells.

The protein localises to the apical cell membrane. It localises to the cell membrane. The protein resides in the sarcolemma. The enzyme catalyses D-fructose(out) = D-fructose(in). With respect to regulation, fructose uptake is inhibited by cytochalasin B. Functions as a fructose transporter that has only low activity with other monosaccharides. Can mediate the uptake of deoxyglucose, but with low efficiency. Essential for fructose uptake in the small intestine. Plays a role in the regulation of salt uptake and blood pressure in response to dietary fructose. Required for the development of high blood pressure in response to high dietary fructose intake. This chain is Solute carrier family 2, facilitated glucose transporter member 5, found in Mus musculus (Mouse).